Here is a 414-residue protein sequence, read N- to C-terminus: 2-acylphloroglucinol 4-prenyltransferase (414 aa).

A chloroplast-targeting transit peptide spans 1-86; it reads MELSSVSSFS…LKPLSIFSCK (86 aa). 8 consecutive transmembrane segments (helical) span residues 153–173, 201–221, 229–249, 256–276, 281–301, 336–356, 359–379, and 394–414; these read FSWPLIFRALLGMLAILGSCF, ISVESAWLLTLSPAIIGFILI, LLTSLYCLAILSGTIYSVPPF, ITAFLCILMIHAGLNFSVYYA, LGLAFVWSPSFSFITAFITFM, LLGTGLLLLNYVAAISTAIIW, AFKSNIMLLSHAILAFSLFFQ, and KSFYEFIWILFSAEYVVYLFI.

This sequence belongs to the UbiA prenyltransferase family. Component an active demethylxanthohumol (DMX) biosynthetic metabolon in glandular trichomes (lupulin glands) that encompasses a chalcone synthase (CHS) and a membrane-bound prenyltransferase. Interacts with PT2, forming a functional metabolon. Interacts with CHIL2; this interaction promotes catalytic activity. Mg(2+) serves as cofactor. As to expression, expressed in trichomes.

It localises to the plastid. The protein resides in the chloroplast membrane. The enzyme catalyses 2',4,4',6'-tetrahydroxychalcone + dimethylallyl diphosphate = desmethylxanthohumol + diphosphate. It carries out the reaction a 2-acylphloroglucinol + dimethylallyl diphosphate = a 2-acyl-4-prenylphloroglucinol + diphosphate. Its pathway is secondary metabolite biosynthesis. Stimulated by CHIL2 but inhibited by CHIL1. Its function is as follows. Involved in the biosynthesis of prenylated phenolics natural products which contribute to the bitter taste of beer and display broad biological activities. Catalyzes the first prenylation step in the beta-bitter acid pathway. Uses dimethylallyl diphosphate (DMAPP) as the prenyl donor. The sequence is that of 2-acylphloroglucinol 4-prenyltransferase from Humulus lupulus (European hop).